The sequence spans 556 residues: Cytochrome P450 4g1 (556 aa).

Positions 356 and 497 each coordinate heme.

It belongs to the cytochrome P450 family. Heme is required as a cofactor.

It localises to the endoplasmic reticulum membrane. Its subcellular location is the microsome membrane. Its function is as follows. May be involved in the metabolism of insect hormones and in the breakdown of synthetic insecticides. This is Cytochrome P450 4g1 (Cyp4g1) from Drosophila melanogaster (Fruit fly).